The following is a 668-amino-acid chain: tRNA 5-methylaminomethyl-2-thiouridine biosynthesis bifunctional protein MnmC (668 aa).

The segment at 1 to 245 (MKHYSIQPAN…KREMLCGVME (245 aa)) is tRNA (mnm(5)s(2)U34)-methyltransferase. The interval 270 to 668 (IGGGIASALL…LLKGKAVKAG (399 aa)) is FAD-dependent cmnm(5)s(2)U34 oxidoreductase.

In the N-terminal section; belongs to the methyltransferase superfamily. tRNA (mnm(5)s(2)U34)-methyltransferase family. It in the C-terminal section; belongs to the DAO family. FAD serves as cofactor.

It localises to the cytoplasm. It carries out the reaction 5-aminomethyl-2-thiouridine(34) in tRNA + S-adenosyl-L-methionine = 5-methylaminomethyl-2-thiouridine(34) in tRNA + S-adenosyl-L-homocysteine + H(+). Catalyzes the last two steps in the biosynthesis of 5-methylaminomethyl-2-thiouridine (mnm(5)s(2)U) at the wobble position (U34) in tRNA. Catalyzes the FAD-dependent demodification of cmnm(5)s(2)U34 to nm(5)s(2)U34, followed by the transfer of a methyl group from S-adenosyl-L-methionine to nm(5)s(2)U34, to form mnm(5)s(2)U34. The protein is tRNA 5-methylaminomethyl-2-thiouridine biosynthesis bifunctional protein MnmC of Escherichia coli O157:H7.